The primary structure comprises 398 residues: Thyrotropin-releasing hormone receptor (398 aa).

Residues 1-28 (MENETGSELNQTQLQPRAVVALEYQVVT) lie on the Extracellular side of the membrane. N3 and N10 each carry an N-linked (GlcNAc...) asparagine glycan. Residues 29–51 (ILLVLIICGLGIVGNIMVVLVVM) form a helical membrane-spanning segment. Over 52–61 (RTKHMRTPTN) the chain is Cytoplasmic. The helical transmembrane segment at 62–83 (CYLVSLAVADLMVLVAAGLPNI) threads the bilayer. Over 84–99 (TDSIYGSWVYGYVGCL) the chain is Extracellular. A disulfide bridge links C98 with C179. Residues 100–121 (CITYLQYLGINASSCSITAFTI) form a helical membrane-spanning segment. The Cytoplasmic segment spans residues 122 to 144 (ERYIAICHPIKAQFLCTFSRAKK). A helical membrane pass occupies residues 145-168 (IIIFVWAFTSIYCMLWFFLLDLNI). The Extracellular portion of the chain corresponds to 169 to 193 (STYKDAIVVSCGYKISRNYYSPIYL). Residues 194 to 215 (MDFGVFYVVPMILATVLYGFIA) traverse the membrane as a helical segment. The Cytoplasmic segment spans residues 216–266 (RILFLNPIPSDPKENSNMWKNDSTHQNKNLNSKTSNRYFNSTVSSRKQVTK). The chain crosses the membrane as a helical span at residues 267–288 (MLAVVVILFALLWMPYRTLVVV). Topologically, residues 289–296 (NSFLSSPF) are extracellular. Residues 297–319 (QENWFLLFCRICIYLNSAINPVI) form a helical membrane-spanning segment. Topologically, residues 320 to 398 (YNLMSQKFRA…LASEITFNQS (79 aa)) are cytoplasmic.

The protein belongs to the G-protein coupled receptor 1 family.

It localises to the cell membrane. Functionally, receptor for thyrotropin-releasing hormone (TRH). Upon ligand binding, this G-protein-coupled receptor triggers activation of the phosphatidylinositol (IP3)-calcium-protein kinase C (PKC) pathway. The chain is Thyrotropin-releasing hormone receptor (TRHR) from Bos taurus (Bovine).